A 463-amino-acid polypeptide reads, in one-letter code: MFS-type transporter criB (463 aa).

Transmembrane regions (helical) follow at residues 5–27 (LVLS…SGIM), 46–66 (MVGT…LTAG), 83–103 (VFVV…MLLI), 106–126 (LVTG…QAEI), 141–161 (LMLA…SFVN), 168–188 (MPLA…YFLP), 256–276 (LFLG…VINY), 293–313 (IFLS…ALFF), 323–343 (LMMA…LTAA), 355–375 (VAMI…LSWV), and 402–422 (FYFL…FLYP).

This sequence belongs to the major facilitator superfamily. Sugar transporter (TC 2.A.1.1) family.

The protein resides in the membrane. MFS-type transporter; part of the gene cluster that mediates the biosynthesis of echinulin family alkaloid. The polypeptide is MFS-type transporter criB (Aspergillus cristatus (Chinese Fuzhuan brick tea-fermentation fungus)).